Here is a 150-residue protein sequence, read N- to C-terminus: Transthyretin (150 aa).

The first 20 residues, 1-20 (MAFHSTLLVFLAGLVFLSEA), serve as a signal peptide directing secretion. The residue at position 33 (Cys33) is a Sulfocysteine. Lys38, Glu77, and Ser140 together coordinate L-thyroxine.

Belongs to the transthyretin family. In terms of assembly, homotetramer. Dimer of dimers. In the homotetramer, subunits assemble around a central channel that can accommodate two ligand molecules. Sulfonation of the reactive cysteine Cys-33 enhances the stability of the native conformation of TTR, avoiding misassembly of the protein leading to amyloid formation. Detected in serum (at protein level). Detected in liver and choroid plexus.

It is found in the secreted. Functionally, thyroid hormone-binding protein. Probably transports thyroxine from the bloodstream to the brain. This is Transthyretin (TTR) from Gallus gallus (Chicken).